Reading from the N-terminus, the 473-residue chain is ATP synthase subunit beta (473 aa).

153 to 160 contacts ATP; sequence GGAGVGKT.

Belongs to the ATPase alpha/beta chains family. As to quaternary structure, F-type ATPases have 2 components, CF(1) - the catalytic core - and CF(0) - the membrane proton channel. CF(1) has five subunits: alpha(3), beta(3), gamma(1), delta(1), epsilon(1). CF(0) has three main subunits: a(1), b(2) and c(9-12). The alpha and beta chains form an alternating ring which encloses part of the gamma chain. CF(1) is attached to CF(0) by a central stalk formed by the gamma and epsilon chains, while a peripheral stalk is formed by the delta and b chains.

It localises to the cell inner membrane. It carries out the reaction ATP + H2O + 4 H(+)(in) = ADP + phosphate + 5 H(+)(out). Its function is as follows. Produces ATP from ADP in the presence of a proton gradient across the membrane. The catalytic sites are hosted primarily by the beta subunits. In Rickettsia rickettsii (strain Iowa), this protein is ATP synthase subunit beta.